A 652-amino-acid chain; its full sequence is MKKRIKELTDLLNRYRYDYYTKDAPSVSDSDYDKLYRELVTLEQSYPEYVLQDSPTQQVGGTILKGFEKYRHQYPLFSLQDAFSREELDAFDKRVKAEFPNATYLAELKIDGLSISLSYENGFLQVGATRGDGNIGENITENIKKIKDIPHQLSEPLTITVRGEAYMSRQSFKAINEARQENGETEFANPRNAAAGTLRQLDTSVVAKRQLATFLYQEASPTARNQQNEVLAELADLGFSVNPYYQLTSSMDEIWDFIKTIEAKRDQLAYDIDGVVIKVNSLAMQEELGFTVKAPRWAIAYKFPAEEKEAEILSVDWTVGRTGVVTPTANLTPVQLAGTTVSRATLHNVDYIAEKDIRIGDTVIVYKAGDIIPAVLNVVMSKRNQQEVMLIPKLCPSCGSELVHFEDEVALRCINPLCPSLIQRSLEHFASRDAMNITGLGPAIVEKLFLAGFVHDVADIYQLTKEDFMQLDGIKEKSADKLLAAIEASKSNSAEKLLFGLGIRHIGSKVSRLILEVYGDISALLTAKEEEIARIDGLGSTIAQSLTQYFEQKTAAILVDELKTAGVNMHYSGQKVNSDAALFGLTVVLTGKLNQLNRNEAKDKLEALGAKVTGSVSKKTDLVIAGSDAGSKLEKAKSLGIRIEDEDWLRKF.

Residues 29–33, 78–79, and Glu-107 each bind NAD(+); these read DSDYD and SL. The active-site N6-AMP-lysine intermediate is the Lys-109. NAD(+)-binding residues include Arg-130, Glu-164, Lys-278, and Lys-302. Zn(2+) is bound by residues Cys-395, Cys-398, Cys-413, and Cys-418. The BRCT domain maps to 577–652; sequence NSDAALFGLT…IEDEDWLRKF (76 aa).

It belongs to the NAD-dependent DNA ligase family. LigA subfamily. Requires Mg(2+) as cofactor. Mn(2+) serves as cofactor.

The catalysed reaction is NAD(+) + (deoxyribonucleotide)n-3'-hydroxyl + 5'-phospho-(deoxyribonucleotide)m = (deoxyribonucleotide)n+m + AMP + beta-nicotinamide D-nucleotide.. In terms of biological role, DNA ligase that catalyzes the formation of phosphodiester linkages between 5'-phosphoryl and 3'-hydroxyl groups in double-stranded DNA using NAD as a coenzyme and as the energy source for the reaction. It is essential for DNA replication and repair of damaged DNA. The protein is DNA ligase of Streptococcus pyogenes serotype M6 (strain ATCC BAA-946 / MGAS10394).